The sequence spans 231 residues: 2-phospho-L-lactate guanylyltransferase (231 aa).

Belongs to the CofC family. Homodimer.

The catalysed reaction is (2S)-2-phospholactate + GTP + H(+) = (2S)-lactyl-2-diphospho-5'-guanosine + diphosphate. Its pathway is cofactor biosynthesis; coenzyme F420 biosynthesis. Its function is as follows. Guanylyltransferase that catalyzes the activation of (2S)-2-phospholactate (2-PL) as (2S)-lactyl-2-diphospho-5'-guanosine, via the condensation of 2-PL with GTP. It is involved in the biosynthesis of coenzyme F420, a hydride carrier cofactor. The protein is 2-phospho-L-lactate guanylyltransferase of Haloterrigena turkmenica (strain ATCC 51198 / DSM 5511 / JCM 9101 / NCIMB 13204 / VKM B-1734 / 4k) (Halococcus turkmenicus).